The following is a 255-amino-acid chain: MWNIFKNKSGQSHKVKDKFQLDLDNIPKHIAIIMDGNGRWAKERKLPRSLGHKAGVETIRDIVKECNNIGVRYLTLYAFSTENWKRPKEEINALMELLVNYLRKEVAELHQNNVVVNTIGDVSKLPKACEDELMKAYNKTKNNTGLVLNLALNYGGRDEIIRAIKLMYKDIEKKGLDIENVNEDLLKNYLYTKGMPDPDLIIRPSGEQRISNFLLWQCAYSEFWYSNIKWPDFKKHHLHKAIKDYQNRNRRFGGV.

Residue aspartate 35 is part of the active site. Residue aspartate 35 participates in Mg(2+) binding. Residues 36–39 (GNGR), tryptophan 40, arginine 48, histidine 52, and 80–82 (STE) contribute to the substrate site. The Proton acceptor role is filled by asparagine 83. Residues tryptophan 84, arginine 86, arginine 203, and 209 to 211 (RIS) each bind substrate. Position 222 (glutamate 222) interacts with Mg(2+).

The protein belongs to the UPP synthase family. As to quaternary structure, homodimer. Requires Mg(2+) as cofactor.

Catalyzes the condensation of isopentenyl diphosphate (IPP) with allylic pyrophosphates generating different type of terpenoids. This is Isoprenyl transferase from Clostridium tetani (strain Massachusetts / E88).